We begin with the raw amino-acid sequence, 461 residues long: Putative aldehyde dehydrogenase FUS7 (461 aa).

220–225 contributes to the NAD(+) binding site; the sequence is GSTATG. Residues E242 and C276 contribute to the active site.

The protein belongs to the aldehyde dehydrogenase family.

It catalyses the reaction an aldehyde + NAD(+) + H2O = a carboxylate + NADH + 2 H(+). Putative aldehyde dehydrogenase; part of the gene cluster that mediates the biosynthesis of the mycotoxin fusarin C. Within the cluster, FUS1, FUS2, FUS8 and FUS9 are sufficient for fusarin production. The other FUS cluster members are not essential for fusarin C biosynthesis. In Gibberella moniliformis (strain M3125 / FGSC 7600) (Maize ear and stalk rot fungus), this protein is Putative aldehyde dehydrogenase FUS7.